Consider the following 150-residue polypeptide: Probable cyclase FGR4 (150 aa).

It participates in secondary metabolite biosynthesis. Probable cyclase; part of the gene cluster that mediates the biosynthesis of the tetraketides fugralins such as linear fugralin A and cyclic fugralin B, volatile compounds that play a role in the asexual reproductive cycle but are not involved in pathogenicity. Fugralin B is similar to fugralin A except for a cyclization between the carboxylic acid C-8 and the alcohol on C-4 resulting in a six membered lactone ring, probably catalyzed by the cyclase FGR4. One of the key features of fugralins is the presence of a double methyl group, which is only rarely encountered in fungal secondary metabolites. As the fugralins cluster does not contain an independent methyltransferase, the PKS FGR1 is probably responsible for adding two methyl groups to the same carbon atom. The exact role of the individual cluster genes remains unknown and further work is needed to unravel the biosynthetic pathway. The sequence is that of Probable cyclase FGR4 from Gibberella zeae (strain ATCC MYA-4620 / CBS 123657 / FGSC 9075 / NRRL 31084 / PH-1) (Wheat head blight fungus).